Here is a 293-residue protein sequence, read N- to C-terminus: 33 kDa chaperonin (293 aa).

2 cysteine pairs are disulfide-bonded: Cys238–Cys240 and Cys271–Cys274.

The protein belongs to the HSP33 family. In terms of processing, under oxidizing conditions two disulfide bonds are formed involving the reactive cysteines. Under reducing conditions zinc is bound to the reactive cysteines and the protein is inactive.

The protein localises to the cytoplasm. In terms of biological role, redox regulated molecular chaperone. Protects both thermally unfolding and oxidatively damaged proteins from irreversible aggregation. Plays an important role in the bacterial defense system toward oxidative stress. In Staphylococcus aureus (strain USA300), this protein is 33 kDa chaperonin.